Here is an 829-residue protein sequence, read N- to C-terminus: Probable methyltransferase PMT26 (829 aa).

At 1–17 the chain is on the cytoplasmic side; it reads MAQPRYTRIDNRRPSSN. Residues 18–38 form a helical; Signal-anchor for type II membrane protein membrane-spanning segment; the sequence is YCSTVTVVVFVALCLVGIWMM. Over 39–829 the chain is Lumenal; sequence TSSSVGPAQN…EVETLTYAIG (791 aa). Residues 55-258 form a disordered region; that stretch reads DNKDGIKKQM…TSGDLSPPGA (204 aa). Basic and acidic residues-rich tracts occupy residues 85-143, 151-160, 168-177, and 187-231; these read NEDK…DSKS, LDEKKDLKDN, TNEKQTKPET, and ENQK…KENT. N-linked (GlcNAc...) asparagine glycosylation is found at Asn215, Asn247, Asn264, and Asn270. The segment covering 241-252 has biased composition (polar residues); it reads QEGQSKNETSGD. Residues 271-291 are disordered; sequence GSFSTQATESKNEKEAQKGSG. Residues 280 to 291 are compositionally biased toward basic and acidic residues; it reads SKNEKEAQKGSG. N-linked (GlcNAc...) asparagine glycans are attached at residues Asn302, Asn579, Asn595, and Asn756.

It belongs to the methyltransferase superfamily.

It is found in the golgi apparatus membrane. The sequence is that of Probable methyltransferase PMT26 from Arabidopsis thaliana (Mouse-ear cress).